A 275-amino-acid chain; its full sequence is 5'-nucleotidase SurE (275 aa).

A divalent metal cation contacts are provided by D12, D13, S44, and N102.

The protein belongs to the SurE nucleotidase family. A divalent metal cation serves as cofactor.

It localises to the cytoplasm. It catalyses the reaction a ribonucleoside 5'-phosphate + H2O = a ribonucleoside + phosphate. Its function is as follows. Nucleotidase that shows phosphatase activity on nucleoside 5'-monophosphates. This is 5'-nucleotidase SurE from Synechococcus sp. (strain RCC307).